The following is a 357-amino-acid chain: MGCTMSAEDRAAAERSRDIEKKLKEDGIQAAKDIKLLLLGAGESGKSTIVKQMKIIHEGGFTSEDNKQYKPVVYSNTIQSLVAIVRAMSTLNIPYGDNEREEIKSDAKIVLDVIARMEDTEPFSEELLAAMKRLWTDTGVQECFGRSNEYQLNDSAKYFLDDLDRLGSKDYMPTEQDILRTRVKTTGIVEVHFSFKNLNFKLFDVGGQRSERKKWIHCFEDVTAIIFCVAMSEYDQVLHEDETTNRMQESLKLFDNICNNKWFTDTSIILFLNKKDLFEEKIKKSSLTICFNEYTGNQTYEEAAAYIQAQFEAKNKSSSKEIYCHQTCATDTNNIQFVFDAVTDVIIANNLRGCGLY.

The N-myristoyl glycine moiety is linked to residue G2. C3 carries S-palmitoyl cysteine lipidation. A G-alpha domain is found at 32-357 (KDIKLLLLGA…ANNLRGCGLY (326 aa)). The tract at residues 35-48 (KLLLLGAGESGKST) is G1 motif. Residues 40-47 (GAGESGKS), 179-185 (LRTRVKT), 204-208 (DVGGQ), 273-276 (NKKD), and A329 each bind GTP. The Mg(2+) site is built by S47 and T185. Positions 177-185 (DILRTRVKT) are G2 motif. The interval 200–209 (FKLFDVGGQR) is G3 motif. Positions 269-276 (ILFLNKKD) are G4 motif. The segment at 327 to 332 (TCATDT) is G5 motif.

It belongs to the G-alpha family. G(i/o/t/z) subfamily. In terms of assembly, g proteins are composed of 3 units; alpha, beta and gamma. The alpha chain contains the guanine nucleotide binding site.

Functionally, guanine nucleotide-binding proteins (G proteins) are involved as modulators or transducers in various transmembrane signaling systems. The G(o) protein function is not clear. In Mizuhopecten yessoensis (Japanese scallop), this protein is Guanine nucleotide-binding protein G(o) subunit alpha (SCGOA).